Here is an 876-residue protein sequence, read N- to C-terminus: Alanine--tRNA ligase (876 aa).

The Zn(2+) site is built by His565, His569, Cys667, and His671.

It belongs to the class-II aminoacyl-tRNA synthetase family. Zn(2+) serves as cofactor.

Its subcellular location is the cytoplasm. It catalyses the reaction tRNA(Ala) + L-alanine + ATP = L-alanyl-tRNA(Ala) + AMP + diphosphate. Functionally, catalyzes the attachment of alanine to tRNA(Ala) in a two-step reaction: alanine is first activated by ATP to form Ala-AMP and then transferred to the acceptor end of tRNA(Ala). Also edits incorrectly charged Ser-tRNA(Ala) and Gly-tRNA(Ala) via its editing domain. The polypeptide is Alanine--tRNA ligase (Staphylococcus aureus (strain MRSA252)).